Here is a 225-residue protein sequence, read N- to C-terminus: MENVLKNDWEPLLAPEFEKEYYLTLSSFLTEEYSTHVVYPKVEDIFNALQYTSYENTKVVILGQDPYHGPNQAHGLSFSVQPGVKTPPSLLNMYKELRDEYGYEIPNNGYLVKWAEQGVLLLNTVLTVRQGEANSHKGKGWEHFTDRVIELLNEREKPVIFILWGRHAQAKKKLITNPNHHIIESVHPSPLSARRGFFGSKPYSKINTILANMGEREIDWEIPNL.

Residue aspartate 65 is the Proton acceptor of the active site.

It belongs to the uracil-DNA glycosylase (UDG) superfamily. UNG family.

The protein localises to the cytoplasm. The enzyme catalyses Hydrolyzes single-stranded DNA or mismatched double-stranded DNA and polynucleotides, releasing free uracil.. Its function is as follows. Excises uracil residues from the DNA which can arise as a result of misincorporation of dUMP residues by DNA polymerase or due to deamination of cytosine. In Bacillus cereus (strain B4264), this protein is Uracil-DNA glycosylase.